Reading from the N-terminus, the 314-residue chain is tRNA pseudouridine synthase B (314 aa).

Residue His43 coordinates substrate. Residue Asp48 is the Nucleophile of the active site. Substrate contacts are provided by Tyr76, Tyr179, and Leu200.

This sequence belongs to the pseudouridine synthase TruB family. Type 1 subfamily.

It catalyses the reaction uridine(55) in tRNA = pseudouridine(55) in tRNA. Functionally, responsible for synthesis of pseudouridine from uracil-55 in the psi GC loop of transfer RNAs. This chain is tRNA pseudouridine synthase B, found in Enterobacter sp. (strain 638).